Here is a 540-residue protein sequence, read N- to C-terminus: MLLLWVSVVAASALAAPAPGADGQRRGAIQAWPDAPNVLLVVSDSFDGRLTFYPGSQVVKLPFINFMKAHGTSFLNAYTNSPICCPSRAAMWSGLFTHLTESWNNFKGLDPNYTTWMDVMEKHGYRTQKFGKLDYTSGHHSISNRVEAWTRDVAFLLRQEGRPMVNLAPKKTKVRVMQVDWKNTDRAVNWLRKEASNSTQPFVLYLGLNLPHPYPSPSSGENFGSSTFHTSRYWLKKVSYDAIKIPKWSPLSEMHPVDYYSSYTKNCTGKFTEKEIKNIRAFYYAMCAETDAMLGEIILALRQLGLLQKTIVIYTSDHGELAMEHRQFYKMSMYEASSHVPLLIMGPGIQANLQVSSVVSLVDIYPTMLDIAGIPLPQNLSGYSLLPSSSEMFKNEQKFKNLHPPWILSEFHGCNVNASTYMLRTNQWKYIAYSDGASVLPQLFDLSSDPDELTNIAAKFPEVTSSLDQKLRSIINYPKVSASVHQYNKEQFIKWKQSIGQNYSNVIANLRWHQDWLKKPKKYENAIDQWLKSHSDAKTI.

A signal peptide spans 1–22 (MLLLWVSVVAASALAAPAPGAD). Positions 44 and 84 each coordinate Ca(2+). The Nucleophile role is filled by C84. C84 is subject to 3-oxoalanine (Cys). N112 carries N-linked (GlcNAc...) asparagine glycosylation. Substrate is bound at residue K132. Residue N197 is glycosylated (N-linked (GlcNAc...) asparagine). H255 is a binding site for substrate. N-linked (GlcNAc...) asparagine glycosylation occurs at N266. Positions 317 and 318 each coordinate Ca(2+). N-linked (GlcNAc...) asparagine glycans are attached at residues N379, N417, and N502.

It belongs to the sulfatase family. The cofactor is Ca(2+). The conversion to 3-oxoalanine (also known as C-formylglycine, FGly), of a serine or cysteine residue in prokaryotes and of a cysteine residue in eukaryotes, is critical for catalytic activity. Post-translationally, the 75-kDa precursor undergoes proteolytic processing to yield a 23 kDa form. In terms of processing, N-glycosylated with both high mannose and complex type sugars.

The protein resides in the secreted. It localises to the lysosome. It catalyses the reaction an aryl sulfate + H2O = a phenol + sulfate + H(+). The catalysed reaction is Hydrolysis of the 2-sulfate groups of the 2-O-sulfo-D-glucuronate residues of chondroitin sulfate, heparin and heparitin sulfate.. In terms of biological role, catalyzes the hydrolysis of pseudosubstrates such as p-nitrocatechol sulfate and p-nitrophenyl sulfate. Catalyzes the hydrolysis of the 2-sulfate groups of the 2-O-sulfo-D-glucuronate residues of chondroitin sulfate, heparin and heparitin sulfate. Acts selectively on 2-sulfoglucuronate and lacks activity against 2-sulfoiduronate. The chain is Arylsulfatase K (ARSK) from Bos taurus (Bovine).